Here is a 120-residue protein sequence, read N- to C-terminus: Large ribosomal subunit protein uL14 (120 aa).

This sequence belongs to the universal ribosomal protein uL14 family. In terms of assembly, part of the 50S ribosomal subunit. Forms a cluster with proteins L3 and L19. In the 70S ribosome, L14 and L19 interact and together make contacts with the 16S rRNA in bridges B5 and B8.

Functionally, binds to 23S rRNA. Forms part of two intersubunit bridges in the 70S ribosome. This chain is Large ribosomal subunit protein uL14, found in Dictyoglomus turgidum (strain DSM 6724 / Z-1310).